Reading from the N-terminus, the 143-residue chain is MKALYMVFVLWVLIGCFLSSECQRGFRGQHDPTRPLSPSNPSSHFYPQPDPNRVQISQPDNIPIFMFEQPHSLNICVPPPPLYLGEEFEKLPPNTHIPYILIRPDIEPPSKYIQPVPRKKSNATPAANNFITTATAPNSTDSF.

A signal peptide spans 1-22 (MKALYMVFVLWVLIGCFLSSEC). The interval 28–50 (GQHDPTRPLSPSNPSSHFYPQPD) is disordered. Positions 36–45 (LSPSNPSSHF) are enriched in polar residues.

The protein localises to the secreted. May play a role in protection or detoxification. This is Submaxillary gland androgen-regulated protein 2, isoform gamma (Smr2) from Mus musculus (Mouse).